The chain runs to 269 residues: Shikimate dehydrogenase (NADP(+)) (269 aa).

Residues 19–21 and Thr-66 contribute to the shikimate site; that span reads SLS. Lys-70 (proton acceptor) is an active-site residue. Residue Asp-82 participates in NADP(+) binding. Positions 91 and 106 each coordinate shikimate. NADP(+)-binding positions include 130 to 134, 153 to 158, and Ile-214; these read GAGGA and NRTKEK. Tyr-216 provides a ligand contact to shikimate. An NADP(+)-binding site is contributed by Gly-235. Gln-242 serves as a coordination point for shikimate.

Belongs to the shikimate dehydrogenase family. Homodimer.

The enzyme catalyses shikimate + NADP(+) = 3-dehydroshikimate + NADPH + H(+). The protein operates within metabolic intermediate biosynthesis; chorismate biosynthesis; chorismate from D-erythrose 4-phosphate and phosphoenolpyruvate: step 4/7. Functionally, involved in the biosynthesis of the chorismate, which leads to the biosynthesis of aromatic amino acids. Catalyzes the reversible NADPH linked reduction of 3-dehydroshikimate (DHSA) to yield shikimate (SA). The chain is Shikimate dehydrogenase (NADP(+)) from Aquifex aeolicus (strain VF5).